A 471-amino-acid polypeptide reads, in one-letter code: Argininosuccinate lyase (471 aa).

The protein belongs to the lyase 1 family. Argininosuccinate lyase subfamily.

The protein localises to the cytoplasm. It carries out the reaction 2-(N(omega)-L-arginino)succinate = fumarate + L-arginine. Its pathway is amino-acid biosynthesis; L-arginine biosynthesis; L-arginine from L-ornithine and carbamoyl phosphate: step 3/3. The polypeptide is Argininosuccinate lyase (Ralstonia pickettii (strain 12J)).